The sequence spans 67 residues: Peptide Hp1036 (67 aa).

Residues 1–23 form the signal peptide; the sequence is MKTQFAILLITLVLFQMFSQSDA. Residue F36 is modified to Phenylalanine amide. The propeptide occupies 40–67; it reads GLNDLSDLDELFDGEISEADVDFLREIM.

This sequence belongs to the non-disulfide-bridged peptide (NDBP) superfamily. Short antimicrobial peptide (group 4) family. In terms of tissue distribution, expressed by the venom gland.

Its subcellular location is the secreted. The protein resides in the target cell membrane. In terms of biological role, amphipathic peptide with antibacterial activities. Shows antiviral activities against the herpes simplex virus type-1. It potently inhibits the initial infection by provoking the rupture of viral envelop and the dissociation of proteins from the virions (EC(50) is 0.43 uM). It also effectively inhibits viral attachment (EC(50) is 2.87 uM), viral entry (EC(50) is 4.29 uM) and viral proliferation after infection (EC(50) is 7.86). Morever, it enters mammalian tested cells (Vero) and reduces the intracellular infectivity. This chain is Peptide Hp1036, found in Heterometrus petersii (Asian forest scorpion).